Reading from the N-terminus, the 224-residue chain is MTLKTLPNESMPREKLLQRGPQALSDAELLAIFLRTGTQGMNVIELSDFLIQDFGSLRQLFSASEKEFCQHKGLGQAKYVQLQAVLEMTQRYLAETLKRGDALTSPEQTKLYLSSILRDRQREAFYILFLDNQHRVIKDEILFEGTLDAASVYPREVVKRALHHNAAALILAHNHPSGVAEPSQADRRITRRLIDALGLVDIRILDHFVIGDGESVSFAERGWI.

One can recognise an MPN domain in the interval 102-224 (ALTSPEQTKL…SVSFAERGWI (123 aa)). Zn(2+) contacts are provided by His173, His175, and Asp186. The short motif at 173–186 (HNHPSGVAEPSQAD) is the JAMM motif element.

This sequence belongs to the UPF0758 family.

In Vibrio campbellii (strain ATCC BAA-1116), this protein is UPF0758 protein VIBHAR_00653.